The following is a 320-amino-acid chain: Beta-carotene ketolase (320 aa).

The enzyme catalyses all-trans-beta-carotene + 2 AH2 + 2 O2 = echinenone + 2 A + 3 H2O. It catalyses the reaction echinenone + 2 AH2 + 2 O2 = canthaxanthin + 2 A + 3 H2O. The protein operates within carotenoid biosynthesis; astaxanthin biosynthesis. Converts beta-carotene to canthaxanthin via echinenone. The sequence is that of Beta-carotene ketolase from Haematococcus lacustris (Green alga).